A 342-amino-acid polypeptide reads, in one-letter code: S-adenosylmethionine:tRNA ribosyltransferase-isomerase (342 aa).

Belongs to the QueA family. As to quaternary structure, monomer.

The protein resides in the cytoplasm. It carries out the reaction 7-aminomethyl-7-carbaguanosine(34) in tRNA + S-adenosyl-L-methionine = epoxyqueuosine(34) in tRNA + adenine + L-methionine + 2 H(+). The protein operates within tRNA modification; tRNA-queuosine biosynthesis. Functionally, transfers and isomerizes the ribose moiety from AdoMet to the 7-aminomethyl group of 7-deazaguanine (preQ1-tRNA) to give epoxyqueuosine (oQ-tRNA). The protein is S-adenosylmethionine:tRNA ribosyltransferase-isomerase of Streptococcus pyogenes serotype M49 (strain NZ131).